A 700-amino-acid chain; its full sequence is Pentatricopeptide repeat-containing protein 1, mitochondrial (700 aa).

Residues 49–93 (SSSQLPLGQERQENTGSLGSDPSHSNSTATQEEDEEEEESFGTLS) form a disordered region. Polar residues predominate over residues 62 to 78 (NTGSLGSDPSHSNSTAT). Residues 79–88 (QEEDEEEEES) show a composition bias toward acidic residues. PPR repeat units follow at residues 135-171 (TPYW…RLQP), 172-206 (MESN…DLEP), 207-245 (SDAT…NFEL), 246-280 (NLKT…GHVV), 281-317 (TEET…GLQP), and 318-354 (SRDS…ATVL). A disordered region spans residues 393–414 (SQALGPPEPPEARVPGKAQPEV). 3 PPR repeats span residues 519–553 (DLTF…GLVP), 554–585 (NLQT…QVTP), and 586–620 (NTHI…RVPV). Residues 672 to 700 (HPWQKFRTKPQGDQDTGKEADDGCALGGR) are disordered. Positions 681–692 (PQGDQDTGKEAD) are enriched in basic and acidic residues.

It belongs to the PTCD1 family. Associates with mitochondrial leucine tRNAs. Interacts with ELAC2. As to expression, abundant in testes, skeletal muscle and heart.

The protein resides in the mitochondrion. It is found in the mitochondrion matrix. Mitochondrial protein implicated in negative regulation of leucine tRNA levels, as well as negative regulation of mitochondria-encoded proteins and COX activity. Also affects the 3'-processing of mitochondrial tRNAs. The polypeptide is Pentatricopeptide repeat-containing protein 1, mitochondrial (PTCD1) (Homo sapiens (Human)).